We begin with the raw amino-acid sequence, 335 residues long: uncharacterized protein (335 aa).

2 disordered regions span residues 152 to 179 and 252 to 271; these read IQLPDRMPKTTNGTLADPNMPPKTTVND and LDLFGSPSSENKSTAGSASL. S257 and S260 each carry phosphoserine. Polar residues predominate over residues 257 to 271; sequence SPSSENKSTAGSASL.

This is an uncharacterized protein from Schizosaccharomyces pombe (strain 972 / ATCC 24843) (Fission yeast).